A 328-amino-acid polypeptide reads, in one-letter code: Probable cell division protein WhiA (328 aa).

The H-T-H motif DNA-binding region spans 273–306 (SLEELGALADPPLTKDAVAGRIRRLLAMADKRAS).

The protein belongs to the WhiA family. Monomer in solution.

Involved in cell division and chromosome segregation. Involved in sporulation. May coordinate the cessation of aerial hyphae growth and subsequent chromosome segregation and/or septation. Required for expression of the ParB partioning protein during sporogenesis. Activates its own transcription and represses WhiB. Binds with low affinity to its own promoter and to the Parp2 sporulation-specific promoter. Also binds directly to the RNA polymerase sigma factor WhiG, leading to inhibition of WhiG-dependent transcription in a dose-dependent manner. This chain is Probable cell division protein WhiA, found in Streptomyces coelicolor (strain ATCC BAA-471 / A3(2) / M145).